The following is a 420-amino-acid chain: Zinc finger and BTB domain-containing protein 42 (420 aa).

In terms of domain architecture, BTB spans 24–92 (CDCTVLVGDA…MYEGRLDLHS (69 aa)). Disordered regions lie at residues 174-204 (PPSWQVSEESSGALDLSLKPGPRPEQAHPPC) and 216-248 (QGAQPLVKAEQDSFSEQDSSSPQSADRSPPPVC). Residues 227 to 241 (DSFSEQDSSSPQSAD) show a composition bias toward low complexity. 4 consecutive C2H2-type zinc fingers follow at residues 292–314 (CICPLCCKLFPSTHALQPHLSAH), 332–354 (PTCPLCSKTFSCTYTLKRHERTH), 360–382 (YTCVQCGKSFQYSHNLSRHAVVH), and 388–411 (HACRWCERRFTQSGDLYRHVRKFH).

It belongs to the krueppel C2H2-type zinc-finger protein family. ZBTB18 subfamily.

The protein localises to the cytoplasm. It is found in the nucleus. It localises to the nucleoplasm. Its function is as follows. Transcriptional repressor. Specifically binds DNA and probably acts by recruiting chromatin remodeling multiprotein complexes. This chain is Zinc finger and BTB domain-containing protein 42 (Zbtb42), found in Rattus norvegicus (Rat).